The chain runs to 139 residues: uncharacterized protein (139 aa).

The segment covering Met-1 to Ile-11 has biased composition (polar residues). 2 disordered regions span residues Met-1–Ala-80 and Ala-100–Ser-139. Positions Gly-63–Ala-80 are enriched in low complexity.

This is an uncharacterized protein from Homo sapiens (Human).